We begin with the raw amino-acid sequence, 427 residues long: Probable threonylcarbamoyladenosine tRNA methylthiotransferase (427 aa).

One can recognise an MTTase N-terminal domain in the interval 12–118; it reads MRVYVEGYGC…AGEILKNYVE (107 aa). [4Fe-4S] cluster-binding residues include Cys-21, Cys-57, Cys-86, Cys-155, Cys-159, and Cys-162. One can recognise a Radical SAM core domain in the interval 141–370; the sequence is LKPSLITPLP…DKLRRELSYL (230 aa). Residues 373–427 enclose the TRAM domain; sequence KKYIGKAMKVLVLDEGKGYTDNFKVVKFEGGEVGEFRKVKITDAKTFGLKGELIL.

This sequence belongs to the methylthiotransferase family. CDKAL1 subfamily. [4Fe-4S] cluster serves as cofactor.

The catalysed reaction is N(6)-L-threonylcarbamoyladenosine(37) in tRNA + (sulfur carrier)-SH + AH2 + 2 S-adenosyl-L-methionine = 2-methylsulfanyl-N(6)-L-threonylcarbamoyladenosine(37) in tRNA + (sulfur carrier)-H + 5'-deoxyadenosine + L-methionine + A + S-adenosyl-L-homocysteine + 2 H(+). Its function is as follows. Catalyzes the methylthiolation of N6-threonylcarbamoyladenosine (t(6)A), leading to the formation of 2-methylthio-N6-threonylcarbamoyladenosine (ms(2)t(6)A) at position 37 in tRNAs that read codons beginning with adenine. The sequence is that of Probable threonylcarbamoyladenosine tRNA methylthiotransferase from Methanocaldococcus jannaschii (strain ATCC 43067 / DSM 2661 / JAL-1 / JCM 10045 / NBRC 100440) (Methanococcus jannaschii).